The chain runs to 409 residues: MRNKNIKKVVLAYSGGLDTSAIIPWIKENYSSEVIAFVANVGQNQADLKDIEYKALKSGASQCIIKDLREEFIRDYVYPVLKSGALYEENYLLGTALARPIIAKSQVDLALKLKADGVCHGATGKGNDQVRFETAYVGLAPELKIIAPWREWSFKSRGELLSYLKEKNVKTTASIEKIYSKDENAWHVSTEGGVLEDLWNKPNQDCWTWTNDPKDAPNVPEIISIKIKNGSVIAVNNEFLSPFKCLEKLNLVGIKHGIGRIDVVENRLVGMKSRACYETPGGTILVNALRSLEQLVLDRDSYKWRQQIALEMSYVIYNGNWFSPFRKSLQAAATELATEIDGEVILELYKGTVTAIRKFSPNSLYSKEFATFDQDEVYRQSDADGFIKLYSLPSKIRAINKCMNKALMK.

ATP contacts are provided by residues 12–20 and Ala-39; that span reads AYSGGLDTS. Tyr-91 provides a ligand contact to L-citrulline. Gly-121 is a binding site for ATP. Residues Thr-123, Asn-127, and Asp-128 each coordinate L-aspartate. Asn-127 is a binding site for L-citrulline. 5 residues coordinate L-citrulline: Arg-131, Ser-180, Ser-189, Glu-265, and Tyr-277.

Belongs to the argininosuccinate synthase family. Type 1 subfamily. Homotetramer.

The protein resides in the cytoplasm. The catalysed reaction is L-citrulline + L-aspartate + ATP = 2-(N(omega)-L-arginino)succinate + AMP + diphosphate + H(+). Its pathway is amino-acid biosynthesis; L-arginine biosynthesis; L-arginine from L-ornithine and carbamoyl phosphate: step 2/3. The polypeptide is Argininosuccinate synthase (Buchnera aphidicola subsp. Baizongia pistaciae (strain Bp)).